We begin with the raw amino-acid sequence, 276 residues long: Sulfur carrier protein FdhD (276 aa).

Catalysis depends on Cys-120, which acts as the Cysteine persulfide intermediate.

This sequence belongs to the FdhD family.

It is found in the cytoplasm. Required for formate dehydrogenase (FDH) activity. Acts as a sulfur carrier protein that transfers sulfur from IscS to the molybdenum cofactor prior to its insertion into FDH. The sequence is that of Sulfur carrier protein FdhD from Bordetella bronchiseptica (strain ATCC BAA-588 / NCTC 13252 / RB50) (Alcaligenes bronchisepticus).